The sequence spans 220 residues: 7-cyano-7-deazaguanine synthase (220 aa).

7–17 (LSGGMDSSTLA) serves as a coordination point for ATP. 4 residues coordinate Zn(2+): C187, C195, C198, and C201.

It belongs to the QueC family. The cofactor is Zn(2+).

It carries out the reaction 7-carboxy-7-deazaguanine + NH4(+) + ATP = 7-cyano-7-deazaguanine + ADP + phosphate + H2O + H(+). Its pathway is purine metabolism; 7-cyano-7-deazaguanine biosynthesis. Its function is as follows. Catalyzes the ATP-dependent conversion of 7-carboxy-7-deazaguanine (CDG) to 7-cyano-7-deazaguanine (preQ(0)). This Methanospirillum hungatei JF-1 (strain ATCC 27890 / DSM 864 / NBRC 100397 / JF-1) protein is 7-cyano-7-deazaguanine synthase.